A 155-amino-acid chain; its full sequence is DNA-binding protein inhibitor ID-1 (155 aa).

A bHLH domain is found at 53 to 105 (LPALLDEQQVNVLLYDMNGCYSRLKELVPTLPQNRKVSKVEILQHVIDYIRDL). A Nuclear export signal motif is present at residues 98 to 111 (VIDYIRDLQLELNS).

Heterodimer with other HLH proteins. Interacts with COPS5, IFI204, GATA4 and NKX2-5. Interacts with CLOCK and BMAL1.

The protein resides in the cytoplasm. The protein localises to the nucleus. Functionally, transcriptional regulator (lacking a basic DNA binding domain) which negatively regulates the basic helix-loop-helix (bHLH) transcription factors by forming heterodimers and inhibiting their DNA binding and transcriptional activity. Implicated in regulating a variety of cellular processes, including cellular growth, senescence, differentiation, apoptosis, angiogenesis, and neoplastic transformation. Inhibits skeletal muscle and cardiac myocyte differentiation. Regulates the circadian clock by repressing the transcriptional activator activity of the CLOCK-BMAL1 heterodimer. The polypeptide is DNA-binding protein inhibitor ID-1 (ID1) (Homo sapiens (Human)).